The sequence spans 157 residues: Small ribosomal subunit protein uS7 (157 aa).

This sequence belongs to the universal ribosomal protein uS7 family. As to quaternary structure, part of the 30S ribosomal subunit. Contacts proteins S9 and S11.

In terms of biological role, one of the primary rRNA binding proteins, it binds directly to 16S rRNA where it nucleates assembly of the head domain of the 30S subunit. Is located at the subunit interface close to the decoding center, probably blocks exit of the E-site tRNA. The chain is Small ribosomal subunit protein uS7 from Eikenella corrodens.